Consider the following 197-residue polypeptide: MFGCLVAGRLVQTDAQQVASDKFVFNLPDYEHVNHVVVFLLGTVPFPEGLGGAVYLCVPGGAAGQVWQLLGFITNEKPSAIFRISGLKAGEGSSHPFGMMDAPAAPSMAQVGVSVEGLHLLAQQTPVSSSAVSTLDSFTQFTQKMLDSLFNFTSSFALSQSQMSPNPSEMFIPASSIRRWYENFQRRLMQNPNFWKT.

The protein belongs to the OPI10 family.

The protein resides in the cytoplasm. Its subcellular location is the cytosol. It is found in the nucleus. Acts as a specific nuclear import carrier for hsp70 proteins following heat-shock stress: acts by mediating the nucleoporin-dependent translocation of ATP-bound hsp70 proteins into the nucleus. hsp70 proteins import is required to protect cells from heat shock damages. This Danio rerio (Zebrafish) protein is Protein Hikeshi (hikeshi).